Here is a 414-residue protein sequence, read N- to C-terminus: CinA-like protein (414 aa).

The protein belongs to the CinA family.

The polypeptide is CinA-like protein (Citrifermentans bemidjiense (strain ATCC BAA-1014 / DSM 16622 / JCM 12645 / Bem) (Geobacter bemidjiensis)).